A 191-amino-acid polypeptide reads, in one-letter code: Zinc finger protein GIS2 (191 aa).

Residues 55-77 form a C2H2-type zinc finger; that stretch reads FKCHYCFRNFPTSQALGGHQNAH.

As to expression, expressed in inflorescence meristems, floral meristems and stem epidermis.

The protein localises to the nucleus. Probable transcription factor required for the initiation of inflorescence trichomes in response to gibberellin and cytokinin. Is not involved in the regulation of trichome branching. Is functionally equivalent to ZFP8. The polypeptide is Zinc finger protein GIS2 (GIS2) (Arabidopsis thaliana (Mouse-ear cress)).